The chain runs to 715 residues: Fatty acid oxidation complex subunit alpha (715 aa).

Residues 1–190 (MIYQGKAITV…KVGAVDAVVA (190 aa)) are enoyl-CoA hydratase/isomerase. Substrate is bound at residue Asp297. Residues 312 to 715 (KDVKLAAVLG…MAKNGQKFFG (404 aa)) form a 3-hydroxyacyl-CoA dehydrogenase region. Residues Met325, Asp344, 401–403 (VVE), Lys408, and Ser430 contribute to the NAD(+) site. His451 serves as the catalytic For 3-hydroxyacyl-CoA dehydrogenase activity. Asn454 lines the NAD(+) pocket. Substrate-binding residues include Asn501 and Tyr660.

It in the N-terminal section; belongs to the enoyl-CoA hydratase/isomerase family. In the C-terminal section; belongs to the 3-hydroxyacyl-CoA dehydrogenase family. In terms of assembly, heterotetramer of two alpha chains (FadB) and two beta chains (FadA).

The catalysed reaction is a (3S)-3-hydroxyacyl-CoA + NAD(+) = a 3-oxoacyl-CoA + NADH + H(+). It carries out the reaction a (3S)-3-hydroxyacyl-CoA = a (2E)-enoyl-CoA + H2O. It catalyses the reaction a 4-saturated-(3S)-3-hydroxyacyl-CoA = a (3E)-enoyl-CoA + H2O. The enzyme catalyses (3S)-3-hydroxybutanoyl-CoA = (3R)-3-hydroxybutanoyl-CoA. The catalysed reaction is a (3Z)-enoyl-CoA = a 4-saturated (2E)-enoyl-CoA. It carries out the reaction a (3E)-enoyl-CoA = a 4-saturated (2E)-enoyl-CoA. It functions in the pathway lipid metabolism; fatty acid beta-oxidation. Involved in the aerobic and anaerobic degradation of long-chain fatty acids via beta-oxidation cycle. Catalyzes the formation of 3-oxoacyl-CoA from enoyl-CoA via L-3-hydroxyacyl-CoA. It can also use D-3-hydroxyacyl-CoA and cis-3-enoyl-CoA as substrate. The protein is Fatty acid oxidation complex subunit alpha of Pseudomonas paraeruginosa (strain DSM 24068 / PA7) (Pseudomonas aeruginosa (strain PA7)).